The sequence spans 230 residues: Dephospho-CoA kinase (230 aa).

A disordered region spans residues 1–21; it reads MSKYAAAPSPYSHQPQTPEHK. The DPCK domain maps to 26–225; that stretch reads VVGLTGGIGS…QDYLKLAQQL (200 aa). ATP is bound at residue 34–39; it reads GSGKSA.

This sequence belongs to the CoaE family.

It is found in the cytoplasm. It carries out the reaction 3'-dephospho-CoA + ATP = ADP + CoA + H(+). It functions in the pathway cofactor biosynthesis; coenzyme A biosynthesis; CoA from (R)-pantothenate: step 5/5. Catalyzes the phosphorylation of the 3'-hydroxyl group of dephosphocoenzyme A to form coenzyme A. This chain is Dephospho-CoA kinase, found in Psychrobacter cryohalolentis (strain ATCC BAA-1226 / DSM 17306 / VKM B-2378 / K5).